Consider the following 205-residue polypeptide: GTP cyclohydrolase-2 (205 aa).

49-53 (RLHSE) serves as a coordination point for GTP. Zn(2+) contacts are provided by cysteine 54, cysteine 65, and cysteine 67. GTP-binding positions include glutamine 70, 92-94 (EGR), and threonine 114. Residue aspartate 126 is the Proton acceptor of the active site. The active-site Nucleophile is the arginine 128. Positions 149 and 154 each coordinate GTP.

This sequence belongs to the GTP cyclohydrolase II family. Zn(2+) serves as cofactor.

It catalyses the reaction GTP + 4 H2O = 2,5-diamino-6-hydroxy-4-(5-phosphoribosylamino)-pyrimidine + formate + 2 phosphate + 3 H(+). Its pathway is cofactor biosynthesis; riboflavin biosynthesis; 5-amino-6-(D-ribitylamino)uracil from GTP: step 1/4. Its function is as follows. Catalyzes the conversion of GTP to 2,5-diamino-6-ribosylamino-4(3H)-pyrimidinone 5'-phosphate (DARP), formate and pyrophosphate. The sequence is that of GTP cyclohydrolase-2 from Pseudomonas aeruginosa (strain LESB58).